Reading from the N-terminus, the 295-residue chain is Ribosomal protein L11 methyltransferase (295 aa).

The S-adenosyl-L-methionine site is built by T146, G167, D189, and N231.

The protein belongs to the methyltransferase superfamily. PrmA family.

The protein localises to the cytoplasm. The enzyme catalyses L-lysyl-[protein] + 3 S-adenosyl-L-methionine = N(6),N(6),N(6)-trimethyl-L-lysyl-[protein] + 3 S-adenosyl-L-homocysteine + 3 H(+). Methylates ribosomal protein L11. The polypeptide is Ribosomal protein L11 methyltransferase (Vibrio vulnificus (strain CMCP6)).